The sequence spans 530 residues: MINYKNLNELENFKILERIDPEVLKTVLTGKRIKEYDITIEGDSVHYNYASKQINENHLKIFQNLSDEANLIEKYKEILNGERVNISENRKVLHHLTRGQIGKDVIEDNKENMREFFQSELEKIYNFAKQIHSGNIKSANGKKFKNVVQIGIGGSSLGPKALYSSIKNYAKKHNLALMNGYFISNIDPDESAEVLNSINIDETLFIIVSKSGNTLETKANMQFLINKLKSNGIKEYKKQMVIITLKNSMLALEEKGYLEYFFMHDSIGGRFSPTSAVGLVLLALCFTEKIVKEILKGANKADKKSLNKNVKDNAPLLAALISIYERNVLNYSSNCIIAYSKAMENFYLHLQQLEMESNGKSVNRFNETINYKTVRIIWGGIGTDVQHSFFQMLHQGTDIVPMDFIGFNETQLKEDVISDNSSSNDKLKANLIAQIIAFSKGKENSNKNKNFKGERPSALIYSKELTPYAIGSILSHYENKVMFEGFLLNINSFDQEGVQLGKTLANQILKNDTFEDEAIESYSKKILKQD.

The active-site Proton donor is the glutamate 356. Catalysis depends on residues histidine 387 and lysine 502.

The protein belongs to the GPI family.

It is found in the cytoplasm. The enzyme catalyses alpha-D-glucose 6-phosphate = beta-D-fructose 6-phosphate. It functions in the pathway carbohydrate biosynthesis; gluconeogenesis. It participates in carbohydrate degradation; glycolysis; D-glyceraldehyde 3-phosphate and glycerone phosphate from D-glucose: step 2/4. Its function is as follows. Catalyzes the reversible isomerization of glucose-6-phosphate to fructose-6-phosphate. The polypeptide is Glucose-6-phosphate isomerase (Borreliella afzelii (strain PKo) (Borrelia afzelii)).